Here is a 735-residue protein sequence, read N- to C-terminus: Lebercilin-like protein (735 aa).

Disordered stretches follow at residues 12-54 (TEAH…NGSV) and 91-115 (EKPL…RGQK). Low complexity predominate over residues 43–53 (QSQNSQASNGS). A coiled-coil region spans residues 205–335 (TAKHQNEVKN…QQKLKEKDRE (131 aa)). Disordered regions lie at residues 356 to 379 (YPKV…NMRH), 473 to 597 (SKEV…PRKH), 632 to 657 (KHRS…AGAR), and 685 to 735 (GRAG…KTVV). Residues 487-525 (TPRRPKENKEDQEKRAIPAEAEPTAKESEAHKDAEDKAL) show a composition bias toward basic and acidic residues. A compositionally biased stretch (low complexity) spans 528–541 (AAGNAGDAGDAGDA). Composition is skewed to basic and acidic residues over residues 542–553 (GNDREVVGEHKV), 573–588 (EVHG…EPGR), and 632–641 (KHRSEQELRL). The segment covering 689 to 707 (SSDSEAVSKSPQTGPQASA) has biased composition (polar residues).

Belongs to the LCA5 family.

The protein is Lebercilin-like protein of Mus musculus (Mouse).